Consider the following 146-residue polypeptide: MSFWKNKTLAEMDTQEWESLCDGCGKCCLNKLIDDETEELYYTNAACKLLDPKDGHCVHYVQRFNFVPSCTQVTVDNVAELTWLPDSCAYRRLHLGRELPSWHPLITGSKEAMHIAGMSIKNKVTCETKVKYMEDHIVLWPLKDIE.

Belongs to the UPF0260 family.

The polypeptide is UPF0260 protein Ssed_2516 (Shewanella sediminis (strain HAW-EB3)).